Reading from the N-terminus, the 37-residue chain is Cytochrome b6-f complex subunit 5 (37 aa).

The helical transmembrane segment at 5–25 (ILLGIVLGMVVVTLAGLFVAA) threads the bilayer.

Belongs to the PetG family. In terms of assembly, the 4 large subunits of the cytochrome b6-f complex are cytochrome b6, subunit IV (17 kDa polypeptide, PetD), cytochrome f and the Rieske protein, while the 4 small subunits are PetG, PetL, PetM and PetN. The complex functions as a dimer.

Its subcellular location is the cellular thylakoid membrane. Component of the cytochrome b6-f complex, which mediates electron transfer between photosystem II (PSII) and photosystem I (PSI), cyclic electron flow around PSI, and state transitions. PetG is required for either the stability or assembly of the cytochrome b6-f complex. The protein is Cytochrome b6-f complex subunit 5 of Synechococcus sp. (strain JA-2-3B'a(2-13)) (Cyanobacteria bacterium Yellowstone B-Prime).